The chain runs to 470 residues: MKLLSILFIFVSSYSFCLAAPATDKVNDLPGLTFTPDFFHYSGYLRAWTDKYLHYWLTESSRAPTQDPLVLWLNGGPGCSSLDGLIEELGPFHVKDFGNSIYYNEYAWNKFANVLFLESPAGVGYSYSTNFNLTVSDDEVSLHNYMALLDFLSKFPEYKGRDFWITGESYAGVYIPTLAVRILNDKKNFPNFKGVAIGNGALNFPNNYNTMVPFYYYHALVRDDLYNDIARNCCNNNIGTCDIYSKFFDPNCRDKVINALDGTNELNMYNLYDVCYYNPTTNLKKAFIERQMRIAVGLPARKHNAATTVPLCAQTNNTHVYLNRADVRKSLHIPSSLPAWEECSDQVGKNYVVTHFNVIPEFQTMIAAGIKILVYNGDVDTACNSIMNQQFLTSLNLTVLGEQEKVNEAWHYSGQTGTAVAGFQTKFAGNVDFLTVRGSGHFVPEDKPKESQQMIFNFINNKDYSTPIQL.

Residues 1–19 form the signal peptide; that stretch reads MKLLSILFIFVSSYSFCLA. A glycan (N-linked (GlcNAc...) asparagine) is linked at Asn132. Ser169 is an active-site residue. N-linked (GlcNAc...) asparagine glycosylation occurs at Asn316. The active site involves Asp380. A glycan (N-linked (GlcNAc...) asparagine) is linked at Asn396. His441 is a catalytic residue.

This sequence belongs to the peptidase S10 family.

The catalysed reaction is Release of a C-terminal amino acid with broad specificity.. The polypeptide is Serine carboxypeptidase ctsa-4.1 (Caenorhabditis elegans).